Consider the following 135-residue polypeptide: Large ribosomal subunit protein uL15 (135 aa).

The disordered stretch occupies residues 21-66 (VGRGQGSGMGKTATRGGKGQTARTGYKAKRGFEGGQQPLQRRLPKI).

It belongs to the universal ribosomal protein uL15 family. In terms of assembly, part of the 50S ribosomal subunit.

In terms of biological role, binds to the 23S rRNA. The chain is Large ribosomal subunit protein uL15 from Helicobacter pylori (strain HPAG1).